Reading from the N-terminus, the 189-residue chain is Protein seele (189 aa).

Positions 1-17 (MLTKALILFGLLALAQG) are cleaved as a signal peptide. One can recognise a Saposin B-type domain in the interval 23-176 (REVKCHVCKA…EQASYCDESP (154 aa)). 3 disulfides stabilise this stretch: C27/C172, C30/C165, and C85/C136. Residues 186–189 (KEEL) carry the Prevents secretion from ER motif.

The protein belongs to the canopy family.

Its subcellular location is the endoplasmic reticulum. Its function is as follows. Involved in embryonic dorsal-ventral patterning which is generated by a series of serine protease processing events where gd processes snk which cleaves ea which then processes spz into the activating ligand for the Toll receptor. Required during this process for the secretion of ea from the developing embryo into the perivitelline space and for ea processing. The sequence is that of Protein seele from Drosophila melanogaster (Fruit fly).